Here is a 642-residue protein sequence, read N- to C-terminus: Acid beta-fructofuranosidase (642 aa).

The Cytoplasmic portion of the chain corresponds to 1-22; the sequence is MRNDSPYTPLLNASHNNHRRRE. The propeptide at 1 to 95 is removed in mature form; sequence MRNDSPYTPL…LSGNLVGEGG (95 aa). A helical; Signal-anchor for type II membrane protein transmembrane segment spans residues 23–43; sequence LLLLFSGLLLLASIIAFSAYI. Residues 44-642 lie on the Lumenal side of the membrane; sequence AQPHADADVS…YHPDQKRQTS (599 aa). N-linked (GlcNAc...) asparagine glycosylation is present at asparagine 100. Substrate-binding positions include 119–122, glutamine 138, tryptophan 146, 181–182, and 245–246; these read WMND, WT, and RD. Aspartate 122 is an active-site residue. Asparagine 267 carries N-linked (GlcNAc...) asparagine glycosylation. Glutamate 300 and aspartate 333 together coordinate substrate. Residues cysteine 490 and cysteine 538 are joined by a disulfide bond. Residues asparagine 491 and asparagine 615 are each glycosylated (N-linked (GlcNAc...) asparagine).

Belongs to the glycosyl hydrolase 32 family. As to quaternary structure, may be present in two forms, a 70 kDa monomer and a heterodimer of the 30 kDa and 38 kDa subunits. The ratio of the levels of the two forms within cells appears to be regulated developmentally.

The protein resides in the membrane. It is found in the vacuole. Its subcellular location is the vacuole lumen. It catalyses the reaction Hydrolysis of terminal non-reducing beta-D-fructofuranoside residues in beta-D-fructofuranosides.. It participates in glycan biosynthesis; sucrose metabolism. The protein is Acid beta-fructofuranosidase (VCINV) of Vicia faba (Broad bean).